We begin with the raw amino-acid sequence, 399 residues long: 5'-C-glycyluridine monooxygenase-decarboxylase (399 aa).

Position 179 (Thr179) interacts with phosphate. An N6-(pyridoxal phosphate)lysine modification is found at Lys230. Phosphate-binding residues include Arg318, Arg322, Arg353, and Arg367.

Belongs to the SelA family. Homooctamer; tetramer of homodimers. It depends on pyridoxal 5'-phosphate as a cofactor.

The catalysed reaction is (5'S,6'R)-C-glycyluridine + O2 = uridine-5'-carboxamide + CO2 + H2O. Its pathway is antibiotic biosynthesis. Its activity is regulated as follows. Activity is dependent on phosphate. Functionally, monooxygenase-decarboxylase involved in the biosynthesis of the capuramycin-type nucleoside antibiotic A-503083. Catalyzes the oxidative decarboxylation of 5'-C-glycyluridine (GlyU) to uridine-5'-carboxamide (CarU). Is stereospecific for the (5'S,6'R)-diastereomer of GlyU. Directly incorporates a single oxygen atom from O(2) into the product CarU. The polypeptide is 5'-C-glycyluridine monooxygenase-decarboxylase (Streptomyces sp).